We begin with the raw amino-acid sequence, 193 residues long: Holliday junction branch migration complex subunit RuvA (193 aa).

The segment at 1–64 (MIGRIAGILL…EDAHLLYGFL (64 aa)) is domain I. The tract at residues 65-139 (TPQERTTFRE…GKLGADLGAL (75 aa)) is domain II. The interval 139-143 (LAGAA) is flexible linker. The interval 144–193 (SPSDHAADILNALVALGYSEKEGLAAIKNVPAGTGVSDGIKLALKALSKA) is domain III.

Belongs to the RuvA family. In terms of assembly, homotetramer. Forms an RuvA(8)-RuvB(12)-Holliday junction (HJ) complex. HJ DNA is sandwiched between 2 RuvA tetramers; dsDNA enters through RuvA and exits via RuvB. An RuvB hexamer assembles on each DNA strand where it exits the tetramer. Each RuvB hexamer is contacted by two RuvA subunits (via domain III) on 2 adjacent RuvB subunits; this complex drives branch migration. In the full resolvosome a probable DNA-RuvA(4)-RuvB(12)-RuvC(2) complex forms which resolves the HJ.

It localises to the cytoplasm. Its function is as follows. The RuvA-RuvB-RuvC complex processes Holliday junction (HJ) DNA during genetic recombination and DNA repair, while the RuvA-RuvB complex plays an important role in the rescue of blocked DNA replication forks via replication fork reversal (RFR). RuvA specifically binds to HJ cruciform DNA, conferring on it an open structure. The RuvB hexamer acts as an ATP-dependent pump, pulling dsDNA into and through the RuvAB complex. HJ branch migration allows RuvC to scan DNA until it finds its consensus sequence, where it cleaves and resolves the cruciform DNA. The polypeptide is Holliday junction branch migration complex subunit RuvA (Burkholderia vietnamiensis (strain G4 / LMG 22486) (Burkholderia cepacia (strain R1808))).